A 379-amino-acid polypeptide reads, in one-letter code: F-box protein At1g67340 (379 aa).

The 52-residue stretch at 41–92 (ADLLDSIPDDLVISILCKLGSTSRCPADFINVLLTCKRLKGLAMNPIVLSRL) folds into the F-box domain. Residues His304, Cys307, Cys320, Cys323, Cys329, Cys333, His342, and Cys346 each coordinate Zn(2+). The MYND-type; atypical zinc-finger motif lies at 304–346 (HAGCGRPETRKHEFRRCSVCGVVNYCSRACQALDWKLRHKMDC). The tract at residues 358 to 379 (GGEGNVQIDGNGNGDNVLLPMS) is disordered.

In terms of assembly, part of a SCF (ASK-cullin-F-box) protein ligase complex. Interacts with SKP1A/ASK1, SKP1B/ASK2, ASK4, ASK11 and ASK13.

The protein resides in the nucleus. The protein operates within protein modification; protein ubiquitination. Functionally, component of SCF(ASK-cullin-F-box) E3 ubiquitin ligase complexes, which may mediate the ubiquitination and subsequent proteasomal degradation of target proteins. This is F-box protein At1g67340 from Arabidopsis thaliana (Mouse-ear cress).